The sequence spans 230 residues: MNDLVDTTEMYLRTIYDLEEEGVTPLRARIAERLEQSGPTVSQTVSRMERDGLLRVAGNRHLELTTKGRAMAIAVMRKHRLAERLLVDVIGLPWEEVHAEACRWEHVMSEDVERRLIKVLNNPTTSPFGNPIPGLLDLGAGPDASAANAKLVRLTELPSGSPVAVVVRQLTEHVQDDIDLITRLKDTGVVPNARVTVETSPAGNVIIIIPGHENVTLPHEMAHAVKVEKV.

The HTH dtxR-type domain maps to 4 to 65; sequence LVDTTEMYLR…VAGNRHLELT (62 aa).

It belongs to the DtxR/MntR family. In terms of assembly, homodimer.

It localises to the cytoplasm. Metal-dependent DNA-binding protein that controls transcription of many genes involved in iron metabolism. This is Iron-dependent repressor IdeR (ideR) from Mycobacterium leprae (strain TN).